The chain runs to 68 residues: Small cysteine-rich protein 2 (68 aa).

Positions 1 to 24 are cleaved as a signal peptide; sequence MAVKFHLCLLLIILVGMGAHVAFA.

This sequence belongs to the Cnidaria small cysteine-rich protein (SCRiP) family. gamma subfamily. Contains 4 disulfide bonds.

It is found in the secreted. The protein resides in the nematocyst. Its function is as follows. Induces neurotoxic symptoms on zebrafish. Has also been claimed to be implied in calcification, but tests on homolog proteins suggest that proteins of this family have a neurotoxic function and not a calcification function. The protein is Small cysteine-rich protein 2 of Orbicella faveolata (Mountainous star coral).